A 240-amino-acid chain; its full sequence is MAQISKYKRVVLKLSGEALAGEKGFGINPVIIKSVAEQVAEVAKMDCEIAVIVGGGNIWRGKTGSDLGMDRGTADYMGMLATVMNALALQDSLEQLDCDTRVLTSIEMKQVAEPYIRRRAIRHLEKKRIVIFAAGIGNPYFSTDTTAALRAAEVEADVILMGKNNVDGVYSADPKVNKDAVKYEHLTHIQMLQEGLQVMDSTASSFCMDNNIPLTVFSIMEEGNIKRAVMGEKIGTLITK.

13–16 (KLSG) is an ATP binding site. An involved in allosteric activation by GTP region spans residues 21–26 (GEKGFG). Residue Gly55 participates in UMP binding. 2 residues coordinate ATP: Gly56 and Arg60. UMP-binding positions include Asp75 and 136 to 143 (IGNPYFST). ATP contacts are provided by Asn164, Tyr170, and Asp173.

The protein belongs to the UMP kinase family. As to quaternary structure, homohexamer.

Its subcellular location is the cytoplasm. It catalyses the reaction UMP + ATP = UDP + ADP. It participates in pyrimidine metabolism; CTP biosynthesis via de novo pathway; UDP from UMP (UMPK route): step 1/1. Allosterically activated by GTP. Inhibited by UTP. Its function is as follows. Catalyzes the reversible phosphorylation of UMP to UDP. This is Uridylate kinase from Staphylococcus aureus (strain Newman).